Reading from the N-terminus, the 74-residue chain is uncharacterized protein (74 aa).

This is an uncharacterized protein from Vaccinia virus (strain Copenhagen) (VACV).